Here is a 481-residue protein sequence, read N- to C-terminus: ATP synthase subunit beta, chloroplastic (481 aa).

162-169 serves as a coordination point for ATP; it reads GGAGVGKT.

The protein belongs to the ATPase alpha/beta chains family. F-type ATPases have 2 components, F(1) - the catalytic core - and F(0) - the membrane proton channel. F(1) has five subunits: alpha(3), beta(3), gamma(1), delta(1), epsilon(1). F(0) has four main subunits: a(1), b(1), b'(1) and c(10-14). The alpha and beta chains form an alternating ring which encloses part of the gamma chain. F(1) is attached to F(0) by a central stalk formed by the gamma and epsilon chains, while a peripheral stalk is formed by the delta, b and b' chains.

The protein localises to the plastid. The protein resides in the chloroplast thylakoid membrane. The catalysed reaction is ATP + H2O + 4 H(+)(in) = ADP + phosphate + 5 H(+)(out). F(1)F(0) ATP synthase produces ATP from ADP in the presence of a proton or sodium gradient. F-type ATPases consist of two structural domains, F(1) containing the extramembraneous catalytic core and F(0) containing the membrane proton channel, linked together by a central stalk and a peripheral stalk. During catalysis, ATP synthesis in the catalytic domain of F(1) is coupled via a rotary mechanism of the central stalk subunits to proton translocation. Its function is as follows. Produces ATP from ADP in the presence of a proton gradient across the membrane. The catalytic sites are hosted primarily by the beta subunits. This Chlamydomonas reinhardtii (Chlamydomonas smithii) protein is ATP synthase subunit beta, chloroplastic.